We begin with the raw amino-acid sequence, 282 residues long: S-formylglutathione hydrolase (282 aa).

At Ala2 the chain carries N-acetylalanine. Lys4 carries the N6-succinyllysine modification. Active-site charge relay system residues include Ser149, Asp226, and His260.

It belongs to the esterase D family. In terms of assembly, homodimer.

It localises to the cytoplasm. The protein localises to the cytoplasmic vesicle. It catalyses the reaction S-formylglutathione + H2O = formate + glutathione + H(+). In terms of biological role, serine hydrolase involved in the detoxification of formaldehyde. The polypeptide is S-formylglutathione hydrolase (ESD) (Bos taurus (Bovine)).